The sequence spans 177 residues: Trafficking regulator of GLUT4 1 (177 aa).

Residues 1–105 (MAHPVQSEFP…QDQEAPRDYL (105 aa)) lie on the Cytoplasmic side of the membrane. Ser48, Ser87, and Ser88 each carry phosphoserine. Positions 71–92 (EAPLPRSPSRASSRRASSIATT) are disordered. The segment covering 72–88 (APLPRSPSRASSRRASS) has biased composition (low complexity). The helical intramembrane region spans 106-126 (ILAVVACFCPVWPLNLIPLII). The Cytoplasmic segment spans residues 127–153 (SIMSRSSMQQGNVDGARRLGRLARLLS). The helical transmembrane segment at 154 to 174 (ITLIIMGIVIIMVAVTVNFTV) threads the bilayer. The Extracellular portion of the chain corresponds to 175–177 (QKK).

The protein belongs to the CD225/Dispanin family. As to quaternary structure, interacts with SLC2A4; the interaction is required for proper SLC2A4 reacycling after insulin stimulation. In terms of tissue distribution, expressed at high levels in heart, mammary gland, adrenal gland, stomach, smooth muscle and skeletal muscle, and at lower levels in brain and lung. Strongly down-regulated in lung cancer tissues, due to hypermethylation of the corresponding locus. Expressed in adipose tissue.

Its subcellular location is the cell membrane. It is found in the endomembrane system. It localises to the cytoplasm. The protein resides in the perinuclear region. Regulates insulin-mediated adipose tissue glucose uptake and transport by modulation of SLC2A4 recycling. Not required for SLC2A4 membrane fusion upon an initial stimulus, but rather is necessary for proper protein recycling during prolonged insulin stimulation. The polypeptide is Trafficking regulator of GLUT4 1 (Homo sapiens (Human)).